A 196-amino-acid polypeptide reads, in one-letter code: Ribonuclease HII (196 aa).

Residues 15–196 (YIVAGIDEAG…RKSFRYSCFI (182 aa)) enclose the RNase H type-2 domain. A divalent metal cation is bound by residues aspartate 21, glutamate 22, and aspartate 112.

The protein belongs to the RNase HII family. Requires Mn(2+) as cofactor. It depends on Mg(2+) as a cofactor.

The protein localises to the cytoplasm. It carries out the reaction Endonucleolytic cleavage to 5'-phosphomonoester.. Functionally, endonuclease that specifically degrades the RNA of RNA-DNA hybrids. The protein is Ribonuclease HII of Rickettsia canadensis (strain McKiel).